The following is a 416-amino-acid chain: UDP-N-acetylmuramoylalanine--D-glutamate ligase (416 aa).

ATP is bound at residue 108–114 (GTTGKTT).

It belongs to the MurCDEF family.

Its subcellular location is the cytoplasm. The enzyme catalyses UDP-N-acetyl-alpha-D-muramoyl-L-alanine + D-glutamate + ATP = UDP-N-acetyl-alpha-D-muramoyl-L-alanyl-D-glutamate + ADP + phosphate + H(+). It functions in the pathway cell wall biogenesis; peptidoglycan biosynthesis. Cell wall formation. Catalyzes the addition of glutamate to the nucleotide precursor UDP-N-acetylmuramoyl-L-alanine (UMA). The sequence is that of UDP-N-acetylmuramoylalanine--D-glutamate ligase from Chlamydia trachomatis serovar L2b (strain UCH-1/proctitis).